We begin with the raw amino-acid sequence, 150 residues long: 1,4-dihydroxy-2-naphthoyl-CoA hydrolase (150 aa).

D22 is an active-site residue.

Belongs to the 4-hydroxybenzoyl-CoA thioesterase family. DHNA-CoA hydrolase subfamily.

The catalysed reaction is 1,4-dihydroxy-2-naphthoyl-CoA + H2O = 1,4-dihydroxy-2-naphthoate + CoA + H(+). The protein operates within cofactor biosynthesis; phylloquinone biosynthesis. It functions in the pathway quinol/quinone metabolism; 1,4-dihydroxy-2-naphthoate biosynthesis; 1,4-dihydroxy-2-naphthoate from chorismate: step 7/7. In terms of biological role, catalyzes the hydrolysis of 1,4-dihydroxy-2-naphthoyl-CoA (DHNA-CoA) to 1,4-dihydroxy-2-naphthoate (DHNA), a reaction involved in phylloquinone (vitamin K1) biosynthesis. The polypeptide is 1,4-dihydroxy-2-naphthoyl-CoA hydrolase (Prochlorococcus marinus (strain NATL1A)).